A 1197-amino-acid chain; its full sequence is Transient receptor potential cation channel subfamily A member 1 (1197 aa).

Over 1 to 753 the chain is Cytoplasmic; that stretch reads MTSGDKETPK…KWNSYGKYFH (753 aa). 14 ANK repeats span residues 89 to 118, 122 to 151, 155 to 184, 190 to 219, 224 to 253, 265 to 294, 298 to 327, 336 to 365, 369 to 398, 443 to 472, 476 to 505, 512 to 541, 544 to 574, and 578 to 607; these read KGRTAAHQAAARNRVNILRYIRDQNGDFNA, AGNTPLHIAVESDAYDALDYLLSIPVDTGV, KKQAPVHLATELNKVKSLRVMGQYRNVIDI, HGRTALHLAAIYDHEECARILITEFDACPR, NGYYPIHEAAKNASSKTMEVFFQWGEQRGC, EGNVPLHSAVHGGDIKAVELCLKSGAKIST, DLSTPVHLACAQGAIDIVKLMFEMQPMEKR, QKMTPLHCASMFDHPDIVSYLVAEGADINA, EHRSPLLLAASRSGWKTVHLLIRLGACISV, MGCSPLHYASRDGHIRSLENLIRLGACINL, NNESPLHFAARYGRYNTVRQLLDSEKGSFI, AGMTPLHISSQQGHTRVVQLLLNRGALLHR, TGRNPLQLAAMSGYTETIELLHSVHSHLLDQ, and DGNTALHLATMENKPHAISVLMSMGCKLVY. A helical transmembrane segment spans residues 754-774; the sequence is LANLLIYSIFLVFVTIYSSLM. Topologically, residues 775–827 are extracellular; that stretch reads MNNIELKAGDNKTMSQYCNMGWEQLTMNLSQNPSVASQIRLDSCEERINRTTA. Asn785, Asn802, and Asn823 each carry an N-linked (GlcNAc...) asparagine glycan. Residues 828–848 traverse the membrane as a helical segment; the sequence is ILFCAVVIVVYILLNSMRELI. Residues 849–856 are Cytoplasmic-facing; it reads QIYQQKLH. A helical transmembrane segment spans residues 857 to 877; sequence YILETVNLISWVLYISALVMV. Residues 878–889 lie on the Extracellular side of the membrane; sequence TPAFQPDGGINT. A helical membrane pass occupies residues 890-910; sequence IHYSAASIAVFLSWFRLLLFL. The Cytoplasmic segment spans residues 911-932; sequence QRFDQVGIYVVMFLEILQTLIK. A helical transmembrane segment spans residues 933–953; that stretch reads VLMVFSILIIAFGLAFYILLS. The Extracellular portion of the chain corresponds to 954–968; that stretch reads KIIDPQPNHLSFSNI. The pore-forming intramembrane region spans 969–989; that stretch reads PMSLLRTFSMMLGELDFVGTY. The Extracellular segment spans residues 990-1004; that stretch reads VNTYYRDQLKVPMTS. A helical transmembrane segment spans residues 1005-1025; it reads FLILSVFMILMPILLMNLLIG. Residues 1026–1197 lie on the Cytoplasmic side of the membrane; it reads LAVGDIESVR…RAALSFNKSM (172 aa).

It belongs to the transient receptor (TC 1.A.4) family. As to quaternary structure, homotetramer.

It is found in the cell membrane. Its function is as follows. Essential for thermotaxis by sensing environmental temperature. Receptor-activated non-selective cation channel involved in detection of sensations such as temperature. Involved in heat nociception by being activated by warm temperature of about 24-29 degrees Celsius. The chain is Transient receptor potential cation channel subfamily A member 1 (TrpA1) from Drosophila melanogaster (Fruit fly).